The primary structure comprises 420 residues: Adenylosuccinate synthetase (420 aa).

Residues 11–17 (GDEGKGK) and 39–41 (GHT) each bind GTP. Catalysis depends on aspartate 12, which acts as the Proton acceptor. Aspartate 12 and glycine 39 together coordinate Mg(2+). Residues 12–15 (DEGK), 37–40 (NAGH), threonine 129, arginine 143, asparagine 218, threonine 233, and arginine 297 each bind IMP. The Proton donor role is filled by histidine 40. A substrate-binding site is contributed by 293 to 299 (VTTGRKR). GTP is bound by residues arginine 299, 325 to 327 (KLD), and 407 to 409 (GTG).

Belongs to the adenylosuccinate synthetase family. Homodimer. Mg(2+) serves as cofactor.

It is found in the cytoplasm. It carries out the reaction IMP + L-aspartate + GTP = N(6)-(1,2-dicarboxyethyl)-AMP + GDP + phosphate + 2 H(+). The protein operates within purine metabolism; AMP biosynthesis via de novo pathway; AMP from IMP: step 1/2. Plays an important role in the de novo pathway and in the salvage pathway of purine nucleotide biosynthesis. Catalyzes the first committed step in the biosynthesis of AMP from IMP. This chain is Adenylosuccinate synthetase, found in Uncinocarpus reesii (strain UAMH 1704).